Reading from the N-terminus, the 300-residue chain is Protease HtpX (300 aa).

The next 2 helical transmembrane spans lie at 4–24 (ILLF…TLRL) and 40–60 (SLLI…LFIS). H145 is a binding site for Zn(2+). E146 is a catalytic residue. Position 149 (H149) interacts with Zn(2+). The next 2 membrane-spanning stretches (helical) occupy residues 153–173 (GDMV…MFFA) and 193–213 (LGFF…GLVA). E225 contacts Zn(2+).

This sequence belongs to the peptidase M48B family. Zn(2+) is required as a cofactor.

It is found in the cell inner membrane. The chain is Protease HtpX from Chromohalobacter salexigens (strain ATCC BAA-138 / DSM 3043 / CIP 106854 / NCIMB 13768 / 1H11).